A 181-amino-acid polypeptide reads, in one-letter code: Translationally-controlled tumor protein homolog (181 aa).

A TCTP domain is found at 1 to 181 (MLIYKDIFTD…VKEAIIEEKC (181 aa)).

It belongs to the TCTP family.

The protein localises to the cytoplasm. Involved in calcium binding and microtubule stabilization. The chain is Translationally-controlled tumor protein homolog (tct-1) from Caenorhabditis elegans.